The primary structure comprises 502 residues: Maturase K (502 aa).

It belongs to the intron maturase 2 family. MatK subfamily.

The protein resides in the plastid. Its subcellular location is the chloroplast. Usually encoded in the trnK tRNA gene intron. Probably assists in splicing its own and other chloroplast group II introns. In Theobroma cacao (Cacao), this protein is Maturase K.